The primary structure comprises 424 residues: MRIAMISMHTSPLEQAGTGDAGGMNVYIRNTAEQLAKLGLSVDIFTRATRPLQGEVVELGDGVRVINCVAGPYEGLSKEELPTQLAAFTGSVLAFTRQHGLSYDLIHSHYWLSGQVAWLLRDLWNIRWVHTPHTLAAVKNNYLSEGDHREPESRRICEQQIVDNADVLIVNTDAEVADVEEGYDSHKARIAVVTPGADIEKFTPGTERATENARRALGIPLSAKVIGFVGRLQRLKGPHVLLQAAATLIERYPDMPIRVLICGGPSGSGLERPKCLEELAEELGISRAVRFLKPRPPEELVSIYQAADVVAMPSANESFGLVALEAQATGTPVVATRIGGLQAAVAEGKSGLLVDGQDPQAWADALGQLLSDDDQRIAMAEYAPQHAARYSWENTAKQLVELYRSLPTMPEEGPAERHPAGSAN.

Residues H9, 20–25 (DAGGMN), K78, Y110, T134, and R154 each bind 1D-myo-inositol 3-phosphate. A UDP-N-acetyl-alpha-D-glucosamine-binding site is contributed by G23. Residues R231, K236, and R295 each coordinate UDP-N-acetyl-alpha-D-glucosamine. Mg(2+) contacts are provided by Y304, Q305, and A307. UDP-N-acetyl-alpha-D-glucosamine is bound by residues E317 and E325. Residue T331 participates in Mg(2+) binding.

Belongs to the glycosyltransferase group 1 family. MshA subfamily. In terms of assembly, homodimer.

The enzyme catalyses 1D-myo-inositol 3-phosphate + UDP-N-acetyl-alpha-D-glucosamine = 1D-myo-inositol 2-acetamido-2-deoxy-alpha-D-glucopyranoside 3-phosphate + UDP + H(+). Its function is as follows. Catalyzes the transfer of a N-acetyl-glucosamine moiety to 1D-myo-inositol 3-phosphate to produce 1D-myo-inositol 2-acetamido-2-deoxy-glucopyranoside 3-phosphate in the mycothiol biosynthesis pathway. This Corynebacterium urealyticum (strain ATCC 43042 / DSM 7109) protein is D-inositol 3-phosphate glycosyltransferase.